A 490-amino-acid polypeptide reads, in one-letter code: Aspartyl/glutamyl-tRNA(Asn/Gln) amidotransferase subunit B (490 aa).

This sequence belongs to the GatB/GatE family. GatB subfamily. Heterotrimer of A, B and C subunits.

The enzyme catalyses L-glutamyl-tRNA(Gln) + L-glutamine + ATP + H2O = L-glutaminyl-tRNA(Gln) + L-glutamate + ADP + phosphate + H(+). It catalyses the reaction L-aspartyl-tRNA(Asn) + L-glutamine + ATP + H2O = L-asparaginyl-tRNA(Asn) + L-glutamate + ADP + phosphate + 2 H(+). Functionally, allows the formation of correctly charged Asn-tRNA(Asn) or Gln-tRNA(Gln) through the transamidation of misacylated Asp-tRNA(Asn) or Glu-tRNA(Gln) in organisms which lack either or both of asparaginyl-tRNA or glutaminyl-tRNA synthetases. The reaction takes place in the presence of glutamine and ATP through an activated phospho-Asp-tRNA(Asn) or phospho-Glu-tRNA(Gln). This chain is Aspartyl/glutamyl-tRNA(Asn/Gln) amidotransferase subunit B, found in Burkholderia vietnamiensis (strain G4 / LMG 22486) (Burkholderia cepacia (strain R1808)).